A 601-amino-acid chain; its full sequence is Elongation factor 4 (601 aa).

The tr-type G domain occupies 8–189 (EQIRNFGIIA…LIVRKAPPPK (182 aa)). 20 to 25 (DHGKST) serves as a coordination point for GTP.

It belongs to the TRAFAC class translation factor GTPase superfamily. Classic translation factor GTPase family. LepA subfamily.

It localises to the cell membrane. It carries out the reaction GTP + H2O = GDP + phosphate + H(+). Its function is as follows. Required for accurate and efficient protein synthesis under certain stress conditions. May act as a fidelity factor of the translation reaction, by catalyzing a one-codon backward translocation of tRNAs on improperly translocated ribosomes. Back-translocation proceeds from a post-translocation (POST) complex to a pre-translocation (PRE) complex, thus giving elongation factor G a second chance to translocate the tRNAs correctly. Binds to ribosomes in a GTP-dependent manner. The protein is Elongation factor 4 of Tropheryma whipplei (strain Twist) (Whipple's bacillus).